The following is a 457-amino-acid chain: Glutamate--tRNA ligase 2 (457 aa).

A 'HIGH' region motif is present at residues 9-19 (PSPTGRIHIGN). Residues 250 to 254 (GLSKR) carry the 'KMSKS' region motif. Position 253 (K253) interacts with ATP.

It belongs to the class-I aminoacyl-tRNA synthetase family. Glutamate--tRNA ligase type 1 subfamily. In terms of assembly, monomer.

Its subcellular location is the cytoplasm. It catalyses the reaction tRNA(Glu) + L-glutamate + ATP = L-glutamyl-tRNA(Glu) + AMP + diphosphate. Catalyzes the attachment of glutamate to tRNA(Glu) in a two-step reaction: glutamate is first activated by ATP to form Glu-AMP and then transferred to the acceptor end of tRNA(Glu). The chain is Glutamate--tRNA ligase 2 from Mesorhizobium japonicum (strain LMG 29417 / CECT 9101 / MAFF 303099) (Mesorhizobium loti (strain MAFF 303099)).